We begin with the raw amino-acid sequence, 471 residues long: Elongation factor 1-alpha (471 aa).

In terms of domain architecture, tr-type G spans 10–239 (KPRLNACFIG…EALNYQDVPE (230 aa)). The segment at 19 to 26 (GHVDSGKS) is G1. 19–26 (GHVDSGKS) is a GTP binding site. Residues 75–79 (GITIT) form a G2 region. Residues 96–99 (DCPG) are G3. GTP-binding positions include 96–100 (DCPGH) and 156–159 (NKMD). The segment at 156 to 159 (NKMD) is G4. Positions 196–198 (SAF) are G5.

This sequence belongs to the TRAFAC class translation factor GTPase superfamily. Classic translation factor GTPase family. EF-Tu/EF-1A subfamily. In terms of assembly, component of the eukaryotic elongation factor 1 complex (eEF1).

It is found in the cytoplasm. Its pathway is protein biosynthesis; polypeptide chain elongation. In terms of biological role, GTP-binding component of the eukaryotic elongation factor 1 complex (eEF1). In its active GTP-bound form, binds to and delivers aminoacyl-tRNA to the A-site of ribosomes during protein biosynthesis. In the presence of a correct codon-anticodon match between the aminoacyl-tRNA and the A-site codon of the ribosome-bound mRNA, the ribosome acts as a GTPase activator and the GTP is hydrolyzed. The inactive GDP-bound form leaves the ribosome and must be recycled by its guanine nucleotide exchange factor (GEF) (eEF1B subcomplex) before binding another molecule of aminoacyl-tRNA. Required for nuclear export of aminoacyl-tRNAs. May also be involved in translational quality control by targeting cotranslationally damaged proteins to the proteasome. In Encephalitozoon cuniculi (strain GB-M1) (Microsporidian parasite), this protein is Elongation factor 1-alpha (TEF1).